A 147-amino-acid chain; its full sequence is Small nuclear ribonucleoprotein-associated protein B (147 aa).

A Sm domain is found at 1–84; sequence MGTTKMVSLL…IVSLSVQGPP (84 aa). Disordered stretches follow at residues 87–106 and 128–147; these read DPSM…PAGR and APPP…FRPV.

The protein belongs to the snRNP SmB/SmN family. Belongs to the 40S cdc5-associated complex (or cwf complex), a spliceosome sub-complex reminiscent of a late-stage spliceosome composed of the U2, U5 and U6 snRNAs and at least brr2, cdc5, cwf2/prp3, cwf3/syf1, cwf4/syf3, cwf5/ecm2, spp42/cwf6, cwf7/spf27, cwf8, cwf9, cwf10, cwf11, cwf12, prp45/cwf13, cwf14, cwf15, cwf16, cwf17, cwf18, cwf19, cwf20, cwf21, cwf22, cwf23, cwf24, cwf25, cwf26, cyp7/cwf27, cwf28, cwf29/ist3, lea1, msl1, prp5/cwf1, prp10, prp12/sap130, prp17, prp22, sap61, sap62, sap114, sap145, slu7, smb1, smd1, smd3, smf1, smg1 and syf2.

The protein localises to the nucleus. It localises to the cytoplasm. Its function is as follows. Plays a role in pre-mRNA splicing as a core component of the spliceosomal U1, U2, U4 and U5 small nuclear ribonucleoproteins (snRNPs), the building blocks of the spliceosome. This Schizosaccharomyces pombe (strain 972 / ATCC 24843) (Fission yeast) protein is Small nuclear ribonucleoprotein-associated protein B (smb1).